Here is a 463-residue protein sequence, read N- to C-terminus: Cysteine--tRNA ligase (463 aa).

C27 contributes to the Zn(2+) binding site. The short motif at 29–39 (PTVYGLIHIGN) is the 'HIGH' region element. Residues C207, H232, and E236 each coordinate Zn(2+). The 'KMSKS' region signature appears at 264–268 (KMSKS). K267 is an ATP binding site.

It belongs to the class-I aminoacyl-tRNA synthetase family. Monomer. Zn(2+) is required as a cofactor.

Its subcellular location is the cytoplasm. The catalysed reaction is tRNA(Cys) + L-cysteine + ATP = L-cysteinyl-tRNA(Cys) + AMP + diphosphate. The chain is Cysteine--tRNA ligase from Pseudothermotoga lettingae (strain ATCC BAA-301 / DSM 14385 / NBRC 107922 / TMO) (Thermotoga lettingae).